Here is a 301-residue protein sequence, read N- to C-terminus: 33 kDa chaperonin (301 aa).

2 disulfides stabilise this stretch: Cys-239–Cys-241 and Cys-272–Cys-275.

It belongs to the HSP33 family. Under oxidizing conditions two disulfide bonds are formed involving the reactive cysteines. Under reducing conditions zinc is bound to the reactive cysteines and the protein is inactive.

The protein resides in the cytoplasm. Functionally, redox regulated molecular chaperone. Protects both thermally unfolding and oxidatively damaged proteins from irreversible aggregation. Plays an important role in the bacterial defense system toward oxidative stress. The polypeptide is 33 kDa chaperonin (Trichormus variabilis (strain ATCC 29413 / PCC 7937) (Anabaena variabilis)).